Reading from the N-terminus, the 409-residue chain is Microfibrillar-associated protein 3-like (409 aa).

The signal sequence occupies residues methionine 1 to alanine 28. The Extracellular segment spans residues lysine 29–aspartate 148. N-linked (GlcNAc...) asparagine glycans are attached at residues asparagine 33, asparagine 37, asparagine 67, asparagine 111, and asparagine 135. The 95-residue stretch at proline 47–arginine 141 folds into the Ig-like C2-type domain. A disulfide bond links cysteine 68 and cysteine 125. A helical membrane pass occupies residues methionine 149–isoleucine 169. Topologically, residues threonine 170–valine 409 are cytoplasmic. The residue at position 287 (tyrosine 287) is a Phosphotyrosine. 4 positions are modified to phosphoserine: serine 298, serine 303, serine 306, and serine 307. The disordered stretch occupies residues valine 319–glutamate 392. The segment covering glutamine 333–proline 348 has biased composition (acidic residues). The span at aspartate 362 to glutamate 372 shows a compositional bias: polar residues.

Its subcellular location is the cell membrane. The protein resides in the nucleus. It localises to the cytoplasm. Functionally, may participate in the nuclear signaling of EGFR and MAPK1/ERK2. This Rattus norvegicus (Rat) protein is Microfibrillar-associated protein 3-like (Mfap3l).